Consider the following 173-residue polypeptide: Alpha-crystallin A chain (173 aa).

The residue at position 1 (Met1) is an N-acetylmethionine. Positions Met1–Glu63 are required for complex formation with BFSP1 and BFSP2. At Gln6 the chain carries Deamidated glutamine; partial. Ser45 is subject to Phosphoserine. The residue at position 50 (Gln50) is a Deamidated glutamine; partial. Residues Leu52–Ser162 enclose the sHSP domain. Lys70 carries the post-translational modification N6-acetyllysine. Gln90 bears the Deamidated glutamine; partial mark. The residue at position 99 (Lys99) is an N6-acetyllysine. Residue His100 coordinates Zn(2+). Asn101 carries the deamidated asparagine; partial modification. Zn(2+)-binding residues include Glu102 and His107. Ser122 bears the Phosphoserine mark. Asn123 is subject to Deamidated asparagine; partial. Residues Lys145 to Ser173 form a disordered region. Gln147 carries the post-translational modification Deamidated glutamine; partial. Residues Gly153 to Pro167 show a composition bias toward basic and acidic residues. His154 provides a ligand contact to Zn(2+). A glycan (O-linked (GlcNAc) serine) is linked at Ser162.

This sequence belongs to the small heat shock protein (HSP20) family. Heteromer composed of three CRYAA and one CRYAB subunits. Inter-subunit bridging via zinc ions enhances stability, which is crucial as there is no protein turn over in the lens. Can also form homodimers and homotetramers (dimers of dimers) which serve as the building blocks of homooligomers. Within homooligomers, the zinc-binding motif is created from residues of 3 different molecules. His-100 and Glu-102 from one molecule are ligands of the zinc ion, and His-107 and His-154 residues from additional molecules complete the site with tetrahedral coordination geometry. Part of a complex required for lens intermediate filament formation composed of BFSP1, BFSP2 and CRYAA. In terms of processing, acetylation at Lys-70 may increase chaperone activity. Undergoes age-dependent proteolytical cleavage at the C-terminus.

It is found in the cytoplasm. The protein resides in the nucleus. Functionally, contributes to the transparency and refractive index of the lens. Acts as a chaperone, preventing aggregation of various proteins under a wide range of stress conditions. Required for the correct formation of lens intermediate filaments as part of a complex composed of BFSP1, BFSP2 and CRYAA. This Oryctolagus cuniculus (Rabbit) protein is Alpha-crystallin A chain (CRYAA).